The chain runs to 322 residues: Phospholipase A1 (322 aa).

A signal peptide spans methionine 1–glycine 18. A disulfide bridge connects residues cysteine 23 and cysteine 106. The Nucleophile role is filled by serine 156. The active-site Charge relay system is aspartate 184. 2 cysteine pairs are disulfide-bonded: cysteine 195–cysteine 200 and cysteine 238–cysteine 246. The Charge relay system role is filled by histidine 248. Disulfide bonds link cysteine 263–cysteine 290, cysteine 264–cysteine 315, and cysteine 283–cysteine 288.

Belongs to the AB hydrolase superfamily. Lipase family. In terms of processing, contains six disulfide bonds. Post-translationally, is not glycosylated. In terms of tissue distribution, expressed by the venom gland.

It is found in the secreted. The catalysed reaction is a 1,2-diacyl-sn-glycero-3-phosphocholine + H2O = a 2-acyl-sn-glycero-3-phosphocholine + a fatty acid + H(+). Catalyzes the hydrolysis of phosphatidylcholine with phospholipase A1 activity. Shows hemolytic activity. Acts as an allergen. The polypeptide is Phospholipase A1 (Polybia paulista (Neotropical social wasp)).